A 78-amino-acid polypeptide reads, in one-letter code: Large ribosomal subunit protein bL28 (78 aa).

Positions 1–24 (MSQVCQVTGKRPVTGNNVSHSQRK) are disordered.

Belongs to the bacterial ribosomal protein bL28 family.

This chain is Large ribosomal subunit protein bL28, found in Chromohalobacter salexigens (strain ATCC BAA-138 / DSM 3043 / CIP 106854 / NCIMB 13768 / 1H11).